A 173-amino-acid chain; its full sequence is Bifunctional protein PyrR (173 aa).

The short motif at 94 to 106 is the PRPP-binding element; it reads VILIDDVLYTGRT.

The protein belongs to the purine/pyrimidine phosphoribosyltransferase family. PyrR subfamily. Homodimer and homohexamer; in equilibrium.

It carries out the reaction UMP + diphosphate = 5-phospho-alpha-D-ribose 1-diphosphate + uracil. Functionally, regulates transcriptional attenuation of the pyrimidine nucleotide (pyr) operon by binding in a uridine-dependent manner to specific sites on pyr mRNA. This disrupts an antiterminator hairpin in the RNA and favors formation of a downstream transcription terminator, leading to a reduced expression of downstream genes. In terms of biological role, also displays a weak uracil phosphoribosyltransferase activity which is not physiologically significant. The sequence is that of Bifunctional protein PyrR from Streptococcus gordonii (strain Challis / ATCC 35105 / BCRC 15272 / CH1 / DL1 / V288).